An 88-amino-acid chain; its full sequence is Large ribosomal subunit protein bL27 (88 aa).

This sequence belongs to the bacterial ribosomal protein bL27 family.

The protein is Large ribosomal subunit protein bL27 of Mycolicibacterium smegmatis (strain ATCC 700084 / mc(2)155) (Mycobacterium smegmatis).